A 116-amino-acid polypeptide reads, in one-letter code: Cocaine- and amphetamine-regulated transcript protein (116 aa).

The N-terminal stretch at 1–27 (MESPRLRLLPLLGAALLLLLPLLGALA) is a signal peptide. Phosphotyrosine is present on Y41. A Phosphoserine modification is found at S48. Disulfide bonds link C82/C100, C88/C108, and C102/C115.

This sequence belongs to the CART family.

The protein localises to the secreted. In terms of biological role, satiety factor closely associated with the actions of leptin and neuropeptide y; this anorectic peptide inhibits both normal and starvation-induced feeding and completely blocks the feeding response induced by neuropeptide Y and regulated by leptin in the hypothalamus. This chain is Cocaine- and amphetamine-regulated transcript protein (CARTPT), found in Bos taurus (Bovine).